Reading from the N-terminus, the 395-residue chain is Protein BUR2 (395 aa).

2 disordered regions span residues 1 to 31 (MSAT…ASSG) and 372 to 395 (AKQE…KPKI). S24 bears the Phosphoserine mark.

As to quaternary structure, belongs to the BUR kinase complex composed of SGV1/BUR1 and BUR2. Interacts with SGV1.

The protein localises to the nucleus. Component of the BUR kinase complex involved in transcription regulation. This complex phosphorylates 'Ser-120' of the UBC2/RAD6 ubiquitin-conjugating enzyme (E2), leading to monoubiquitination of histone H2B, the localization of the PAF1 complex to the chromatin, and the silencing of telomeric-associated genes. Also required for histone H3 'Lys-4' trimethylation. May phosphorylate the 'Ser-5' of the RBP1 carboxy-terminal domain (CTD) repeats. Necessary for the recovery from pheromone-induced growth arrest in the cell cycle G1 phase. Also required for vegetative growth itself. The kinase activity of the complex requires the presence of BUR2. Overexpression of BUR2 interferes with mitotic chromosome segregation. The sequence is that of Protein BUR2 (BUR2) from Saccharomyces cerevisiae (strain ATCC 204508 / S288c) (Baker's yeast).